An 806-amino-acid chain; its full sequence is Protein translocase subunit SecA 2 (806 aa).

Residues Gln122, 140–144 (GEGKT), and Asp533 contribute to the ATP site.

It belongs to the SecA family. In terms of assembly, monomer and homodimer. Part of the essential Sec protein translocation apparatus which comprises SecA, SecYEG and auxiliary proteins SecDF. Other proteins may also be involved.

It localises to the cell membrane. The protein localises to the cytoplasm. The catalysed reaction is ATP + H2O + cellular proteinSide 1 = ADP + phosphate + cellular proteinSide 2.. In terms of biological role, part of the Sec protein translocase complex. Interacts with the SecYEG preprotein conducting channel. Has a central role in coupling the hydrolysis of ATP to the transfer of proteins into and across the cell membrane, serving as an ATP-driven molecular motor driving the stepwise translocation of polypeptide chains across the membrane. The polypeptide is Protein translocase subunit SecA 2 (Mycobacterium ulcerans (strain Agy99)).